Consider the following 124-residue polypeptide: Small ribosomal subunit protein uS12 (124 aa).

The interval 1–32 (MPTIQQLVRKGRQDKVSKNKTPALKGSPQRRG) is disordered. At Asp89 the chain carries 3-methylthioaspartic acid.

The protein belongs to the universal ribosomal protein uS12 family. In terms of assembly, part of the 30S ribosomal subunit. Contacts proteins S8 and S17. May interact with IF1 in the 30S initiation complex.

In terms of biological role, with S4 and S5 plays an important role in translational accuracy. Its function is as follows. Interacts with and stabilizes bases of the 16S rRNA that are involved in tRNA selection in the A site and with the mRNA backbone. Located at the interface of the 30S and 50S subunits, it traverses the body of the 30S subunit contacting proteins on the other side and probably holding the rRNA structure together. The combined cluster of proteins S8, S12 and S17 appears to hold together the shoulder and platform of the 30S subunit. The polypeptide is Small ribosomal subunit protein uS12 (Nocardioides sp. (strain ATCC BAA-499 / JS614)).